The sequence spans 246 residues: 4-hydroxy-tetrahydrodipicolinate reductase (246 aa).

Residue 7–12 (GCSGRM) coordinates NAD(+). R34 contributes to the NADP(+) binding site. NAD(+) contacts are provided by residues 76–78 (ATT) and 102–105 (CPNT). Catalysis depends on H135, which acts as the Proton donor/acceptor. H136 contacts (S)-2,3,4,5-tetrahydrodipicolinate. Residue K139 is the Proton donor of the active site. 145–146 (GT) lines the (S)-2,3,4,5-tetrahydrodipicolinate pocket.

The protein belongs to the DapB family.

It is found in the cytoplasm. It carries out the reaction (S)-2,3,4,5-tetrahydrodipicolinate + NAD(+) + H2O = (2S,4S)-4-hydroxy-2,3,4,5-tetrahydrodipicolinate + NADH + H(+). The enzyme catalyses (S)-2,3,4,5-tetrahydrodipicolinate + NADP(+) + H2O = (2S,4S)-4-hydroxy-2,3,4,5-tetrahydrodipicolinate + NADPH + H(+). It participates in amino-acid biosynthesis; L-lysine biosynthesis via DAP pathway; (S)-tetrahydrodipicolinate from L-aspartate: step 4/4. In terms of biological role, catalyzes the conversion of 4-hydroxy-tetrahydrodipicolinate (HTPA) to tetrahydrodipicolinate. The sequence is that of 4-hydroxy-tetrahydrodipicolinate reductase from Chlamydia caviae (strain ATCC VR-813 / DSM 19441 / 03DC25 / GPIC) (Chlamydophila caviae).